We begin with the raw amino-acid sequence, 95 residues long: Aspartyl/glutamyl-tRNA(Asn/Gln) amidotransferase subunit C (95 aa).

The protein belongs to the GatC family. Heterotrimer of A, B and C subunits.

The catalysed reaction is L-glutamyl-tRNA(Gln) + L-glutamine + ATP + H2O = L-glutaminyl-tRNA(Gln) + L-glutamate + ADP + phosphate + H(+). It catalyses the reaction L-aspartyl-tRNA(Asn) + L-glutamine + ATP + H2O = L-asparaginyl-tRNA(Asn) + L-glutamate + ADP + phosphate + 2 H(+). In terms of biological role, allows the formation of correctly charged Asn-tRNA(Asn) or Gln-tRNA(Gln) through the transamidation of misacylated Asp-tRNA(Asn) or Glu-tRNA(Gln) in organisms which lack either or both of asparaginyl-tRNA or glutaminyl-tRNA synthetases. The reaction takes place in the presence of glutamine and ATP through an activated phospho-Asp-tRNA(Asn) or phospho-Glu-tRNA(Gln). The sequence is that of Aspartyl/glutamyl-tRNA(Asn/Gln) amidotransferase subunit C from Dehalococcoides mccartyi (strain CBDB1).